The primary structure comprises 205 residues: Urease accessory protein UreG (205 aa).

11–18 provides a ligand contact to GTP; it reads GPVGSGKT.

It belongs to the SIMIBI class G3E GTPase family. UreG subfamily. Homodimer. UreD, UreF and UreG form a complex that acts as a GTP-hydrolysis-dependent molecular chaperone, activating the urease apoprotein by helping to assemble the nickel containing metallocenter of UreC. The UreE protein probably delivers the nickel.

Its subcellular location is the cytoplasm. Functionally, facilitates the functional incorporation of the urease nickel metallocenter. This process requires GTP hydrolysis, probably effectuated by UreG. In Prochlorococcus marinus (strain NATL1A), this protein is Urease accessory protein UreG.